We begin with the raw amino-acid sequence, 449 residues long: UDP-N-acetylglucosamine 1-carboxyvinyltransferase (449 aa).

Residues 1–12 (MQVTVNEHDAVE) show a composition bias toward basic and acidic residues. The segment at 1-30 (MQVTVNEHDAVERVATATPAGNREAHAHGT) is disordered. 51–52 (KN) contacts phosphoenolpyruvate. Arg-121 contacts UDP-N-acetyl-alpha-D-glucosamine. The Proton donor role is filled by Cys-145. Position 145 is a 2-(S-cysteinyl)pyruvic acid O-phosphothioketal (Cys-145). Residues 150-154 (RPVDQ), Asp-333, and Ile-355 each bind UDP-N-acetyl-alpha-D-glucosamine.

Belongs to the EPSP synthase family. MurA subfamily.

It localises to the cytoplasm. The catalysed reaction is phosphoenolpyruvate + UDP-N-acetyl-alpha-D-glucosamine = UDP-N-acetyl-3-O-(1-carboxyvinyl)-alpha-D-glucosamine + phosphate. It participates in cell wall biogenesis; peptidoglycan biosynthesis. In terms of biological role, cell wall formation. Adds enolpyruvyl to UDP-N-acetylglucosamine. The protein is UDP-N-acetylglucosamine 1-carboxyvinyltransferase of Burkholderia pseudomallei (strain 1710b).